Reading from the N-terminus, the 546-residue chain is Probable ATP-dependent RNA helicase DDX56 (546 aa).

The Q motif signature appears at 7–35 (LGFEHMGLDPRLLQAVTDLGWSRPTLIQE). Positions 38–218 (IPLALEGKDL…ELVLHNPVTL (181 aa)) constitute a Helicase ATP-binding domain. Residue 51–58 (ARTGSGKT) coordinates ATP. Phosphoserine is present on Ser126. Thr141 is subject to Phosphothreonine. The DEAD box signature appears at 166–169 (DEAD). Positions 230 to 424 (QLQQFQVVCE…PYQFQMEEIE (195 aa)) constitute a Helicase C-terminal domain. 2 disordered regions span residues 324-344 (VKGK…PESG) and 508-546 (RKKR…AKPS). 3 stretches are compositionally biased toward basic residues: residues 325 to 334 (KGKRRGRGSK), 508 to 524 (RKKR…KKVK), and 532 to 546 (FKHR…AKPS).

Belongs to the DEAD box helicase family. DDX56/DBP9 subfamily. May form homooligomeric complexes. Interacts with IRF3. Interacts with OCT4 and POU5F1.

The protein localises to the nucleus. It localises to the nucleolus. It carries out the reaction ATP + H2O = ADP + phosphate + H(+). Its function is as follows. Nucleolar RNA helicase that plays a role in various biological processes including innate immunity, ribosome biogenesis or nucleolus organization. Plays an essential role in maintaining nucleolar integrity in planarian stem cells. Maintains embryonic stem cells proliferation by conventional regulation of ribosome assembly and interaction with OCT4 and POU5F1 complex. Regulates antiviral innate immunity by inhibiting the virus-triggered signaling nuclear translocation of IRF3. Mechanistically, acts by disrupting the interaction between IRF3 and importin IPO5. May play a role in later stages of the processing of the pre-ribosomal particles leading to mature 60S ribosomal subunits. Has intrinsic ATPase activity. This Mus musculus (Mouse) protein is Probable ATP-dependent RNA helicase DDX56 (Ddx56).